Here is a 530-residue protein sequence, read N- to C-terminus: Bifunctional purine biosynthesis protein PurH (530 aa).

In terms of domain architecture, MGS-like spans 1 to 149 (MASDFLPVHR…KNFARVAVAT (149 aa)).

This sequence belongs to the PurH family.

It catalyses the reaction (6R)-10-formyltetrahydrofolate + 5-amino-1-(5-phospho-beta-D-ribosyl)imidazole-4-carboxamide = 5-formamido-1-(5-phospho-D-ribosyl)imidazole-4-carboxamide + (6S)-5,6,7,8-tetrahydrofolate. The catalysed reaction is IMP + H2O = 5-formamido-1-(5-phospho-D-ribosyl)imidazole-4-carboxamide. It functions in the pathway purine metabolism; IMP biosynthesis via de novo pathway; 5-formamido-1-(5-phospho-D-ribosyl)imidazole-4-carboxamide from 5-amino-1-(5-phospho-D-ribosyl)imidazole-4-carboxamide (10-formyl THF route): step 1/1. It participates in purine metabolism; IMP biosynthesis via de novo pathway; IMP from 5-formamido-1-(5-phospho-D-ribosyl)imidazole-4-carboxamide: step 1/1. The polypeptide is Bifunctional purine biosynthesis protein PurH (Xylella fastidiosa (strain M12)).